The chain runs to 337 residues: UDP-3-O-acylglucosamine N-acyltransferase (337 aa).

Residue histidine 238 is the Proton acceptor of the active site.

It belongs to the transferase hexapeptide repeat family. LpxD subfamily. As to quaternary structure, homotrimer.

It catalyses the reaction a UDP-3-O-[(3R)-3-hydroxyacyl]-alpha-D-glucosamine + a (3R)-hydroxyacyl-[ACP] = a UDP-2-N,3-O-bis[(3R)-3-hydroxyacyl]-alpha-D-glucosamine + holo-[ACP] + H(+). It functions in the pathway bacterial outer membrane biogenesis; LPS lipid A biosynthesis. In terms of biological role, catalyzes the N-acylation of UDP-3-O-acylglucosamine using 3-hydroxyacyl-ACP as the acyl donor. Is involved in the biosynthesis of lipid A, a phosphorylated glycolipid that anchors the lipopolysaccharide to the outer membrane of the cell. The protein is UDP-3-O-acylglucosamine N-acyltransferase of Xanthomonas axonopodis pv. citri (strain 306).